Here is a 430-residue protein sequence, read N- to C-terminus: MRVGIKVLGCPKNEADCEVLAGVLREGGHEIVFDVKDADVVVLDTCAFIEDAKRESIDEIFSFVDAKDQYGYKLVVKGCLVQRYYEELKKEIPEVDQWIGVADPEEIANAIENGTDLVPDQPETVYRYRKRIDLEERPYAYVKISDGCDRGCTFCSIPSFKGSLRSRSIEDITREVEDLLKEGKKEIILVAQDTTSYGIDLYRKQALPDLLRRLNSLNGEFWIRVMYLHPDHLTEEIISAMLELDKVVKYFDVPVQHGSDKILKLMGRTKSSEELKKMLSSIRERFPDAVLRTSIIVGFPGETEEDFEELKQFVEEIQFDKLGAFVYSDEEGTVAFNLKEKVDPEMAKRRQEELLLLQAEISNSRLDRFVGKKLKFLVEGKEGKFLVGRTWTEAPEVDGVVFVRGKGKIGDFLEVVIKEHDEYDMWGSVI.

Residues 1–116 enclose the MTTase N-terminal domain; sequence MRVGIKVLGC…IANAIENGTD (116 aa). The [4Fe-4S] cluster site is built by Cys-10, Cys-46, Cys-79, Cys-148, Cys-152, and Cys-155. Positions 134–365 constitute a Radical SAM core domain; the sequence is LEERPYAYVK…LLQAEISNSR (232 aa). Residues 367 to 430 form the TRAM domain; that stretch reads DRFVGKKLKF…DEYDMWGSVI (64 aa).

Belongs to the methylthiotransferase family. RimO subfamily. In terms of assembly, monomer. Requires [4Fe-4S] cluster as cofactor.

The protein localises to the cytoplasm. It carries out the reaction L-aspartate(89)-[ribosomal protein uS12]-hydrogen + (sulfur carrier)-SH + AH2 + 2 S-adenosyl-L-methionine = 3-methylsulfanyl-L-aspartate(89)-[ribosomal protein uS12]-hydrogen + (sulfur carrier)-H + 5'-deoxyadenosine + L-methionine + A + S-adenosyl-L-homocysteine + 2 H(+). Catalyzes the methylthiolation of an aspartic acid residue of ribosomal protein uS12. This chain is Ribosomal protein uS12 methylthiotransferase RimO, found in Thermotoga maritima (strain ATCC 43589 / DSM 3109 / JCM 10099 / NBRC 100826 / MSB8).